Here is a 297-residue protein sequence, read N- to C-terminus: uncharacterized protein (297 aa).

The signal sequence occupies residues M1–G24. 15 residues coordinate heme: C58, C61, H62, C141, C144, H145, C167, C170, H171, C223, C226, H227, C264, C267, and H268. Residues T277–H297 form a disordered region.

Binds 5 heme groups per subunit.

This is an uncharacterized protein from Archaeoglobus fulgidus (strain ATCC 49558 / DSM 4304 / JCM 9628 / NBRC 100126 / VC-16).